The chain runs to 124 residues: CRISPR-associated endoribonuclease Cas2 4 (124 aa).

A Mg(2+)-binding site is contributed by Asp40.

Belongs to the CRISPR-associated endoribonuclease Cas2 protein family. Homodimer, forms a heterotetramer with a Cas1 homodimer. It depends on Mg(2+) as a cofactor.

CRISPR (clustered regularly interspaced short palindromic repeat), is an adaptive immune system that provides protection against mobile genetic elements (viruses, transposable elements and conjugative plasmids). CRISPR clusters contain sequences complementary to antecedent mobile elements and target invading nucleic acids. CRISPR clusters are transcribed and processed into CRISPR RNA (crRNA). Functions as a ssRNA-specific endoribonuclease. Involved in the integration of spacer DNA into the CRISPR cassette. The protein is CRISPR-associated endoribonuclease Cas2 4 of Rhodospirillum rubrum (strain ATCC 11170 / ATH 1.1.1 / DSM 467 / LMG 4362 / NCIMB 8255 / S1).